We begin with the raw amino-acid sequence, 355 residues long: Chorismate synthase (355 aa).

NADP(+) is bound at residue Arg48. FMN-binding positions include 125–127 (RSS), 238–239 (NA), Gly278, 293–297 (KPASS), and Arg319.

This sequence belongs to the chorismate synthase family. As to quaternary structure, homotetramer. It depends on FMNH2 as a cofactor.

It carries out the reaction 5-O-(1-carboxyvinyl)-3-phosphoshikimate = chorismate + phosphate. Its pathway is metabolic intermediate biosynthesis; chorismate biosynthesis; chorismate from D-erythrose 4-phosphate and phosphoenolpyruvate: step 7/7. In terms of biological role, catalyzes the anti-1,4-elimination of the C-3 phosphate and the C-6 proR hydrogen from 5-enolpyruvylshikimate-3-phosphate (EPSP) to yield chorismate, which is the branch point compound that serves as the starting substrate for the three terminal pathways of aromatic amino acid biosynthesis. This reaction introduces a second double bond into the aromatic ring system. In Baumannia cicadellinicola subsp. Homalodisca coagulata, this protein is Chorismate synthase.